The chain runs to 457 residues: Protein translocase subunit SecY (457 aa).

A run of 10 helical transmembrane segments spans residues 17–37, 75–95, 118–138, 162–182, 195–215, 230–250, 287–307, 326–346, 386–406, and 412–432; these read IFFTFSLLALCRIGVFIPVPG, IALGVVPYISASIIVQLLVVF, TRLFTLVLACVQSLLFAKFAL, WVFYLTTVVVMITGTLLLMWV, ISLIITLGILASFPSVLGSIF, IVSLLILCAVFVFVLMATVLI, VIPVIFASSLLMFPATIGQFL, VAYSIFYVLLIIFFTYFWTAT, LLGAVFLAVVAILPSILGRIL, and VSYFLGGTAMLIVVGVILDTM.

Belongs to the SecY/SEC61-alpha family. In terms of assembly, component of the Sec protein translocase complex. Heterotrimer consisting of SecY, SecE and SecG subunits. The heterotrimers can form oligomers, although 1 heterotrimer is thought to be able to translocate proteins. Interacts with the ribosome. Interacts with SecDF, and other proteins may be involved. Interacts with SecA.

It localises to the cell inner membrane. Its function is as follows. The central subunit of the protein translocation channel SecYEG. Consists of two halves formed by TMs 1-5 and 6-10. These two domains form a lateral gate at the front which open onto the bilayer between TMs 2 and 7, and are clamped together by SecE at the back. The channel is closed by both a pore ring composed of hydrophobic SecY resides and a short helix (helix 2A) on the extracellular side of the membrane which forms a plug. The plug probably moves laterally to allow the channel to open. The ring and the pore may move independently. The protein is Protein translocase subunit SecY of Chlamydia trachomatis serovar D (strain ATCC VR-885 / DSM 19411 / UW-3/Cx).